A 425-amino-acid chain; its full sequence is Aromatic prenyl transferase ptmE (425 aa).

L-tryptophan contacts are provided by residues 83–84 and Glu-92; that span reads GI. The substrate site is built by Arg-107, Lys-198, Tyr-200, Arg-265, Lys-267, Tyr-269, Tyr-345, Tyr-410, and Tyr-414.

It belongs to the tryptophan dimethylallyltransferase family. Homodimer.

Its pathway is secondary metabolite biosynthesis. Aromatic prenyl transferase; part of the gene cluster that mediates the biosynthesis of the indole diterpenes penitrems. The geranylgeranyl diphosphate (GGPP) synthase ptmG catalyzes the first step in penitrem biosynthesis via conversion of farnesyl pyrophosphate and isopentyl pyrophosphate into geranylgeranyl pyrophosphate (GGPP). Condensation of indole-3-glycerol phosphate with GGPP by the prenyl transferase ptmC then forms 3-geranylgeranylindole (3-GGI). Epoxidation by the FAD-dependent monooxygenase ptmM leads to a epoxidized-GGI that is substrate of the terpene cyclase ptmB for cyclization to yield paspaline. Paspaline is subsequently converted to 13-desoxypaxilline by the cytochrome P450 monooxygenase ptmP, the latter being then converted to paxilline by the cytochrome P450 monooxygenase ptmQ. Paxilline is converted to beta-paxitriol via C-10 ketoreduction by the short-chain dehydrogenase ptmH which can be monoprenylated at the C-20 by the indole diterpene prenyltransferase ptmD. A two-step elimination (acetylation and elimination) process performed by the O-acetyltransferase ptmV and ptmI leads to the production of the prenylated form of penijanthine. The FAD-linked oxidoreductase ptmO then converts the prenylated form of penijanthine into PC-M5 which is in turn transformed into PC-M4 by the aromatic dimethylallyltransferase ptmE. Five sequential oxidative transformations performed by the cytochrome P450 monooxygenases ptmK, ptmU, ptmL, ptmN and ptmJ yield the various penitrem compounds. PtmK, ptmU and ptmM are involved in the formation of the key bicyclic ring of penitrem C via the formation of the intermediates secopenitrem D and penitrem D. PtmL catalyzes the epoxidation of penitrem D and C to yield penitrem B and F, respectively. PtmJ catalyzes the last benzylic hydroxylation to convert penitrem B to prenitrem E and penitrem F to penitrem A. This chain is Aromatic prenyl transferase ptmE, found in Penicillium ochrochloron.